A 153-amino-acid chain; its full sequence is MAFKKKDTENKEFYIVDKRILPKSIQNVIKVNDLILKTKMSKYSAIKKVGISRSTYYKYKDFIKPFYEGGEDRIYSLHLSLKDRVGILSDVLDVIAREKISILTVVQNMAVDGVAKSTILIKLSESMQKKVDKIISKIGKVEGIADIRITGSN.

The 77-residue stretch at 76-152 (SLHLSLKDRV…GIADIRITGS (77 aa)) folds into the ACT domain.

The protein belongs to the UPF0735 family.

In Fusobacterium nucleatum subsp. nucleatum (strain ATCC 25586 / DSM 15643 / BCRC 10681 / CIP 101130 / JCM 8532 / KCTC 2640 / LMG 13131 / VPI 4355), this protein is UPF0735 ACT domain-containing protein FN1487.